A 177-amino-acid polypeptide reads, in one-letter code: Preprotein translocase subunit SECE1 (177 aa).

Residues 1-38 constitute a chloroplast transit peptide; the sequence is MSLTAQFSPPVTGITRSLRDTKPSLSNLRVFPVYTEIR. The tract at residues 60–87 is disordered; the sequence is RDTAGSESESEATPSPAEESGSGEDKEV. Residues 64–79 show a composition bias toward low complexity; it reads GSESESEATPSPAEES. The helical transmembrane segment at 140-160 threads the bilayer; the sequence is VVLGVIAGSSVVLLTVNFLLA.

This sequence belongs to the SecE/SEC61-gamma family. As to quaternary structure, part of the Sec protein translocation apparatus. Interacts with SCY1 and ALB3.

It localises to the plastid. Its subcellular location is the chloroplast thylakoid membrane. In terms of biological role, involved in the import/insertion pathway in the thylakoids. The signal recognition particle is not involved in the insertion of SECE1 in the thylakoid membrane. This is Preprotein translocase subunit SECE1 (SECE1) from Arabidopsis thaliana (Mouse-ear cress).